A 446-amino-acid chain; its full sequence is Asparagine--tRNA ligase (446 aa).

This sequence belongs to the class-II aminoacyl-tRNA synthetase family. As to quaternary structure, homodimer.

It localises to the cytoplasm. The enzyme catalyses tRNA(Asn) + L-asparagine + ATP = L-asparaginyl-tRNA(Asn) + AMP + diphosphate + H(+). In Sorangium cellulosum (strain So ce56) (Polyangium cellulosum (strain So ce56)), this protein is Asparagine--tRNA ligase.